A 399-amino-acid chain; its full sequence is Stage III sporulation protein AE (399 aa).

The first 24 residues, M1–A24, serve as a signal peptide directing secretion. The next 7 helical transmembrane spans lie at V104 to L124, A140 to I160, S172 to V192, G209 to V229, I248 to G268, V315 to L335, and I368 to I388.

Interacts with SpoIIIJ and YqjG.

The protein resides in the cell membrane. Required during sporulation for activation of sigma factor SpoIIIG/SigG after engulfment is completed in the prespore. Overexpression in the absence of SpoIIIJ is synthetically lethal. This Bacillus subtilis (strain 168) protein is Stage III sporulation protein AE (spoIIIAE).